Consider the following 104-residue polypeptide: SOSS complex subunit C (104 aa).

A2 carries the N-acetylalanine modification. Phosphoserine is present on S50.

The protein belongs to the SOSS-C family. In terms of assembly, component of the SOSS complex, composed of SOSS-B (SOSS-B1/NABP2 or SOSS-B2/NABP1), SOSS-A/INTS3 and SOSS-C/INIP. SOSS complexes containing SOSS-B1/NABP2 are more abundant than complexes containing SOSS-B2/NABP1. Interacts with INTS3; the interaction is direct.

It is found in the nucleus. Its function is as follows. Component of the SOSS complex, a multiprotein complex that functions downstream of the MRN complex to promote DNA repair and G2/M checkpoint. The SOSS complex associates with single-stranded DNA at DNA lesions and influences diverse endpoints in the cellular DNA damage response including cell-cycle checkpoint activation, recombinational repair and maintenance of genomic stability. Required for efficient homologous recombination-dependent repair of double-strand breaks (DSBs) and ATM-dependent signaling pathways. The chain is SOSS complex subunit C (Inip) from Mus musculus (Mouse).